The primary structure comprises 133 residues: Large ribosomal subunit protein bL12 (133 aa).

Residues 98-118 (DMVESTPKPIKEGTGKEDAED) are disordered.

It belongs to the bacterial ribosomal protein bL12 family. As to quaternary structure, homodimer. Part of the ribosomal stalk of the 50S ribosomal subunit. Forms a multimeric L10(L12)X complex, where L10 forms an elongated spine to which 2 to 4 L12 dimers bind in a sequential fashion. Binds GTP-bound translation factors.

Forms part of the ribosomal stalk which helps the ribosome interact with GTP-bound translation factors. Is thus essential for accurate translation. The protein is Large ribosomal subunit protein bL12 of Crocosphaera subtropica (strain ATCC 51142 / BH68) (Cyanothece sp. (strain ATCC 51142)).